A 33-amino-acid polypeptide reads, in one-letter code: ISILASLSTFQQMWISKQEYDESGPSIVHRKCF.

This sequence belongs to the actin family.

The protein resides in the cytoplasm. The protein localises to the cytoskeleton. The catalysed reaction is ATP + H2O = ADP + phosphate + H(+). Its function is as follows. Actins are highly conserved proteins that are involved in various types of cell motility and are ubiquitously expressed in all eukaryotic cells. The chain is Actin from Dictyocaulus viviparus (Bovine lungworm).